The primary structure comprises 369 residues: Core-capsid bridging protein (369 aa).

Positions 15–50 (APEIYGPPKKEEQDYKPRKLKRVKKKKKDDDDDELD) are disordered. Residues 22–31 (PKKEEQDYKP) are compositionally biased toward basic and acidic residues. Positions 32-41 (RKLKRVKKKK) are enriched in basic residues. The residue at position 85 (threonine 85) is a Phosphothreonine; by host. Serine 166 is modified (phosphoserine; by host). The disordered stretch occupies residues 307–342 (PGYRGYTYRPRRRATTRRRTTTGTRRRRRRRQPVLA). A compositionally biased stretch (basic residues) spans 315–338 (RPRRRATTRRRTTTGTRRRRRRRQ).

The protein belongs to the adenoviridae core-capsid bridging protein family. As to quaternary structure, monomer. Homodimer. Exists in equilibrium between monomers and dimers in solution. Interacts with the histone-like nucleoprotein; this interactions bridge the virus core to the capsid. Interacts with core protein X; this interactions bridge the virus core to the capsid. Interacts with the endosome lysis protein VI; this interactions bridge the virus core to the capsid. Interacts with the peripentonal hexons. Interacts with host NPM1; this interaction might play a role in virus assembly.

Its subcellular location is the virion. The protein resides in the host nucleus. It is found in the host nucleolus. Functionally, associates loosely with the viral DNA to form an outer shell around the nucleoprotein-DNA complex and links it with the capsid by binding the endosome lysis protein. Dissociates from the viral genome during entry. Might be involved in nuclear capsid assembly of the viral particles through its association with NPM1/nucleophosmin. The chain is Core-capsid bridging protein from Homo sapiens (Human).